Consider the following 263-residue polypeptide: Ret finger protein-like 4B (263 aa).

The RING-type zinc-finger motif lies at 11-53 (CPVCLDFFSCSISLSCTHVFCFDCIQRYILENHDFRAMCPLCR). Positions 76–263 (HNSRLEQSLH…ESGNVLTICP (188 aa)) constitute a B30.2/SPRY domain.

The chain is Ret finger protein-like 4B (RFPL4B) from Homo sapiens (Human).